The primary structure comprises 411 residues: Potassium channel subfamily K member 3 (411 aa).

Residues 1–8 (MKRQNVRT) lie on the Cytoplasmic side of the membrane. A helical transmembrane segment spans residues 9–29 (LALIVCTFTYLLVGAAVFDAL). N-linked (GlcNAc...) asparagine glycosylation occurs at N53. An intramembrane region (pore-forming) is located at residues 78 to 101 (WRFAGSFYFAITVITTIGYGHAAP). Residues 108-128 (VFCMFYALLGIPLTLVMFQSL) form a helical membrane-spanning segment. Over 129–158 (GERINTFVRYLLHRAKRGLGMRHAEVSMAN) the chain is Cytoplasmic. The chain crosses the membrane as a helical span at residues 159-179 (MVLIGFVSCISTLCIGAAAFS). The pore-forming intramembrane region spans 184 to 207 (WTFFQAYYYCFITLTTIGFGDYVA). A helical transmembrane segment spans residues 223-243 (FSFVYILTGLTVIGAFLNLVV). At 244–411 (LRFMTMNAED…RGLMKRRSSV (168 aa)) the chain is on the cytoplasmic side.

The protein belongs to the two pore domain potassium channel (TC 1.A.1.8) family. As to quaternary structure, homodimer. Heterodimer with KCNK1. Heterodimer with KCNK9. In terms of tissue distribution, strongest expression in heart. Moderate expression in lung and brain. Low levels in liver, kidney and skeletal muscle. Expressed in cerebellar granule cells (at protein level).

The protein localises to the cell membrane. The enzyme catalyses K(+)(in) = K(+)(out). It catalyses the reaction Na(+)(in) = Na(+)(out). With respect to regulation, inhibited by extracellular acidification, muscarinic signaling, divalent metal cations Zn(2+) and Ba(2+), isoflurane, bupivacaine and phenytoin. Activated by protein kinase A. Ruthenium red resistant. Its function is as follows. K(+) channel that conducts voltage-dependent outward rectifying currents upon membrane depolarization. Voltage sensing is coupled to K(+) electrochemical gradient in an 'ion flux gating' mode where outward but not inward ion flow opens the gate. Changes ion selectivity and becomes permeable to Na(+) ions in response to extracellular acidification. Protonation of the pH sensor His-98 stabilizes C-type inactivation conformation likely converting the channel from outward K(+)-conducting, to inward Na(+)-conducting to nonconductive state. Homo- and heterodimerizes to form functional channels with distinct regulatory and gating properties. Allows K(+) currents with fast-gating kinetics important for the repolarization and hyperpolarization phases of action potentials. In cerebellar granule cells, heteromeric KCNK3:KCNK9 channel may hyperpolarize the resting membrane potential to limit intrinsic neuronal excitability, but once the action potential threshold is reached, it may support high-frequency action potential firing and increased neuronal excitability. Dispensable for central chemosensory respiration i.e. breathing controlled by brainstem CO2/pH, it rather conducts pH-sensitive currents and controls the firing rate of serotonergic raphe neurons involved in potentiation of the respiratory chemoreflex. Additionally, imparts chemosensitivity to type 1 cells in carotid bodies which respond to a decrease in arterial oxygen pressure or an increase in carbon dioxide pressure or pH to initiate adaptive changes in pulmonary ventilation. In adrenal gland, contributes to the maintenance of a hyperpolarized resting membrane potential of aldosterone-producing cells at zona glomerulosa and limits aldosterone release as part of a regulatory mechanism that controls arterial blood pressure and electrolyte homeostasis. In brown adipocytes, mediates K(+) efflux that counteracts norepinephrine-induced membrane depolarization, limits Ca(2+) efflux and downstream cAMP and PKA signaling, ultimately attenuating lipid oxidation and adaptive thermogenesis. The protein is Potassium channel subfamily K member 3 of Rattus norvegicus (Rat).